Here is a 303-residue protein sequence, read N- to C-terminus: MPKILDGKKLAQEIELILQQAIESGLEVAKRRPGLAVLRVGDDPASGVYVNYKEKACDRIGVRSFAKHLKEDISLEELTETIKSLNEEKNVDGILLQLPLPSHLDEAALLRSIDPDKDADGLHPLNLGRLIKGEKGPRSCTPAGVMSLLERNQIKIEGKRAVVVGRSILVGKPMALMLEAANATVTIAHSRTKDLPSLTKEADLLVVAAGKPYLIGKNHVSENCVVIDVGIHRLPPDEENIKELKKTKLCGDVKIFEIEDKVAAYSPVPGGVGPMTVTMLLANTVDRWQKHCGLPLTISHLLP.

NADP(+) is bound by residues 165-167, serine 190, and isoleucine 231; that span reads GRS.

This sequence belongs to the tetrahydrofolate dehydrogenase/cyclohydrolase family. As to quaternary structure, homodimer.

The enzyme catalyses (6R)-5,10-methylene-5,6,7,8-tetrahydrofolate + NADP(+) = (6R)-5,10-methenyltetrahydrofolate + NADPH. It carries out the reaction (6R)-5,10-methenyltetrahydrofolate + H2O = (6R)-10-formyltetrahydrofolate + H(+). The protein operates within one-carbon metabolism; tetrahydrofolate interconversion. Catalyzes the oxidation of 5,10-methylenetetrahydrofolate to 5,10-methenyltetrahydrofolate and then the hydrolysis of 5,10-methenyltetrahydrofolate to 10-formyltetrahydrofolate. The protein is Bifunctional protein FolD of Prochlorococcus marinus (strain NATL1A).